A 487-amino-acid chain; its full sequence is MKNKKRLCHILKYIITCFLFGVIFIIPIQAQIVLQTDFTDSENARQNIDYHFNVFNRITPLNGVKIKTPLGKPRVCIVRPLGGIVKNGKPDISKDSYKWDKKSKTFYTDFTVLKNQIDGVINSGYAIHQIVLDNPSWAFQRNKNGELVADSLKVSTYGNAEPPKDYNAWSNYLKDVLKFLVNTYGEESMLKIQFNIGREIGTPSHWSGSKEAFFEFYKISSSAIREVLPTAKVGTHFLWGSSKNAWGTDFIKWSKANNVHYDFIGVSFYPFYNKPDRTLFKEVYAKDFAVIKDIPEWHKNAKLEMHEYALIKSLNKAGNAFENAPKAQQNSFIVGLMKMFYEHNMQNVFQWGQGTNFEAAQEALFSIQGQTYYTSTKNGKPLLETNDVDAIFIKDVSNNIYNIMAYNYNANPNATTDEHLNLKAKLDVPPGTKVKVRFALYNKEKDTMSWSEWKEEATQGNEKSKSVISLNAELPVFSFLKYEVKVQ.

A signal peptide spans 1-30 (MKNKKRLCHILKYIITCFLFGVIFIIPIQA). E199 acts as the Proton donor in catalysis.

Belongs to the glycosyl hydrolase 39 family.

It is found in the periplasm. In terms of biological role, alpha-rhamnosidase involved in ulvan degradation. Ulvan is the main polysaccharide component of the Ulvales (green seaweed) cell wall. It is composed of disaccharide building blocks comprising 3-sulfated rhamnose (Rha3S) linked to D-glucuronic acid (GlcA), L-iduronic acid (IduA), or D-xylose (Xyl). Endo-acting alpha-1,4-L-rhamnosidase cleaves rhamnose sections interspersed between xylose residues within the polymer, degrading larger oligomers with consecutive Xyl-Rha3S units that are resistant to the ulvan lyases and producing dimers Xyl-Rha3S and Xyl2S-Rha3S as the smallest products. The protein is Alpha-1,4-L-rhamnosidase of Formosa agariphila (strain DSM 15362 / KCTC 12365 / LMG 23005 / KMM 3901 / M-2Alg 35-1).